The chain runs to 198 residues: Dual specificity protein phosphatase 1 (198 aa).

A disordered region spans residues 1 to 20 (MSSRDRGSPSSSSSSSSLPG). A compositionally biased stretch (low complexity) spans 8 to 17 (SPSSSSSSSS). Positions 26–47 (EKVKNQIQALVRVIKVARTYRD) are caM binding domain 1. Residues 50–191 (VPSLIEQGLY…LQDLEKSMQV (142 aa)) enclose the Tyrosine-protein phosphatase domain. Cys135 acts as the Phosphocysteine intermediate in catalysis. The caM binding domain 2 stretch occupies residues 151 to 180 (MKKHGMTLAQALQHVKSKRPVASPNAGFIR).

It belongs to the protein-tyrosine phosphatase family. Non-receptor class dual specificity subfamily. As to quaternary structure, interacts with calmodulin (CaM) in a calcium Ca(2+)-dependent manner. In terms of tissue distribution, expressed in roots, stems, leaves and flowers.

It localises to the nucleus. The protein localises to the cytoplasm. The enzyme catalyses O-phospho-L-tyrosyl-[protein] + H2O = L-tyrosyl-[protein] + phosphate. It carries out the reaction O-phospho-L-seryl-[protein] + H2O = L-seryl-[protein] + phosphate. It catalyses the reaction O-phospho-L-threonyl-[protein] + H2O = L-threonyl-[protein] + phosphate. With respect to regulation, inhibited by sodium vanadate and sodium tungstate. NaF and spermifine repress specifically phosphoserine and phosphothreonine phosphatase activity. In terms of biological role, has a dual specificity toward Ser/Thr and Tyr-containing proteins. Dephosphorylates MPK4 in vitro. In Arabidopsis thaliana (Mouse-ear cress), this protein is Dual specificity protein phosphatase 1 (DSPTP1).